The sequence spans 1464 residues: Gag-Pol polyprotein (1464 aa).

The N-myristoyl glycine; by host moiety is linked to residue glycine 2. Residues 7 to 31 (VLSGKKTDELEKVRLRPGGKKRYML) are interaction with Gp41. A Nuclear export signal motif is present at residues 16–22 (LEKVRLR). A Nuclear localization signal motif is present at residues 26–32 (KKRYMLK). The residue at position 130 (tyrosine 130) is a Phosphotyrosine; by host. Residues 186 to 223 (NCVGEHQAAMQIIREIINEEAADWDQQHPSPGPMPAGQ) form an interaction with human PPIA/CYPA and NUP153 region. A dimerization/Multimerization of capsid protein p24 region spans residues 274-360 (YNPTNILDIK…GGPGQKARLM (87 aa)). CCHC-type zinc fingers lie at residues 387–404 (VTCWNCGKAGHTARQCKA) and 408–425 (QGCWKCGQQGHIMSKCPE). The segment covering 483–499 (AKELHATREEAEGEQRE) has biased composition (basic and acidic residues). The interval 483 to 504 (AKELHATREEAEGEQRETLQGG) is disordered. The dimerization of protease stretch occupies residues 511 to 515 (PQFSL). Residues 531 to 600 (EVLLDTGADD…PINIFGRNIL (70 aa)) enclose the Peptidase A2 domain. Residue aspartate 535 is the For protease activity; shared with dimeric partner of the active site. 2 dimerization of protease regions span residues 559–565 (GIGGFIN) and 598–610 (NILNSLGMTLNFP). Residues 654–844 (GQLEEAPPTN…PFKWMGYELW (191 aa)) enclose the Reverse transcriptase domain. Positions 719, 794, and 795 each coordinate Mg(2+). Residues 836-844 (FKWMGYELW) are RT 'primer grip'. The Tryptophan repeat motif motif lies at 1006 to 1022 (WDQWWTDYWQVTWIPEW). The 124-residue stretch at 1042-1165 (LEGVETYYTD…VDHLVSQGIR (124 aa)) folds into the RNase H type-1 domain. Mg(2+)-binding residues include aspartate 1051, glutamate 1086, aspartate 1106, and aspartate 1157. The Integrase-type zinc-finger motif lies at 1171 to 1212 (EKIEPAQEEHEKYHNNVKELVHKFGIPQLVARQIVNSCDKCQ). Zn(2+)-binding residues include histidine 1180, histidine 1184, cysteine 1208, and cysteine 1211. Positions 1222 to 1373 (VNSELGTWQM…PAERIVNMIT (152 aa)) constitute an Integrase catalytic domain. Positions 1232, 1284, and 1320 each coordinate Mg(2+). Positions 1391–1438 (FRVYYREGRDQLWKGPGDLLWKGEGAVIIKVGTEIKVIPRRKAKIIRN) form a DNA-binding region, integrase-type.

Homotrimer; further assembles as hexamers of trimers. Interacts with gp41 (via C-terminus). Interacts with host CALM1; this interaction induces a conformational change in the Matrix protein, triggering exposure of the myristate group. Interacts with host AP3D1; this interaction allows the polyprotein trafficking to multivesicular bodies during virus assembly. Part of the pre-integration complex (PIC) which is composed of viral genome, matrix protein, Vpr and integrase. In terms of assembly, homodimer; the homodimer further multimerizes as homohexamers or homopentamers. Interacts with human PPIA/CYPA. Interacts with human NUP153. Interacts with host PDZD8; this interaction stabilizes the capsid. Interacts with monkey TRIM5; this interaction destabilizes the capsid. As to quaternary structure, homodimer, whose active site consists of two apposed aspartic acid residues. Heterodimer of p66 RT and p51 RT (RT p66/p51). Heterodimerization of RT is essential for DNA polymerase activity. The overall folding of the subdomains is similar in p66 RT and p51 RT but the spatial arrangements of the subdomains are dramatically different. In terms of assembly, homotetramer; may further associate as a homohexadecamer. Part of the pre-integration complex (PIC) which is composed of viral genome, matrix protein, Vpr and integrase. Interacts with human SMARCB1/INI1 and human PSIP1/LEDGF isoform 1. Interacts with human KPNA3; this interaction might play a role in nuclear import of the pre-integration complex. Interacts with human NUP153; this interaction might play a role in nuclear import of the pre-integration complex. It depends on Mg(2+) as a cofactor. Specific enzymatic cleavages by the viral protease yield mature proteins. The protease is released by autocatalytic cleavage. The polyprotein is cleaved during and after budding, this process is termed maturation. Proteolytic cleavage of p66 RT removes the RNase H domain to yield the p51 RT subunit. Nucleocapsid protein p7 might be further cleaved after virus entry.

The protein resides in the host cell membrane. Its subcellular location is the host endosome. It is found in the host multivesicular body. It localises to the virion membrane. The protein localises to the host nucleus. The protein resides in the host cytoplasm. Its subcellular location is the virion. It catalyses the reaction Endopeptidase for which the P1 residue is preferably hydrophobic.. It carries out the reaction Endohydrolysis of RNA in RNA/DNA hybrids. Three different cleavage modes: 1. sequence-specific internal cleavage of RNA. Human immunodeficiency virus type 1 and Moloney murine leukemia virus enzymes prefer to cleave the RNA strand one nucleotide away from the RNA-DNA junction. 2. RNA 5'-end directed cleavage 13-19 nucleotides from the RNA end. 3. DNA 3'-end directed cleavage 15-20 nucleotides away from the primer terminus.. The enzyme catalyses 3'-end directed exonucleolytic cleavage of viral RNA-DNA hybrid.. The catalysed reaction is DNA(n) + a 2'-deoxyribonucleoside 5'-triphosphate = DNA(n+1) + diphosphate. Its activity is regulated as follows. Protease: The viral protease is inhibited by many synthetic protease inhibitors (PIs), such as amprenavir, atazanavir, indinavir, loprinavir, nelfinavir, ritonavir and saquinavir. Use of protease inhibitors in tritherapy regimens permit more ambitious therapeutic strategies. Reverse transcriptase/ribonuclease H: RT can be inhibited either by nucleoside RT inhibitors (NRTIs) or by non nucleoside RT inhibitors (NNRTIs). NRTIs act as chain terminators, whereas NNRTIs inhibit DNA polymerization by binding a small hydrophobic pocket near the RT active site and inducing an allosteric change in this region. Classical NRTIs are abacavir, adefovir (PMEA), didanosine (ddI), lamivudine (3TC), stavudine (d4T), tenofovir (PMPA), zalcitabine (ddC), and zidovudine (AZT). Classical NNRTIs are atevirdine (BHAP U-87201E), delavirdine, efavirenz (DMP-266), emivirine (I-EBU), and nevirapine (BI-RG-587). The tritherapies used as a basic effective treatment of AIDS associate two NRTIs and one NNRTI. In terms of biological role, mediates, with Gag polyprotein, the essential events in virion assembly, including binding the plasma membrane, making the protein-protein interactions necessary to create spherical particles, recruiting the viral Env proteins, and packaging the genomic RNA via direct interactions with the RNA packaging sequence (Psi). Gag-Pol polyprotein may regulate its own translation, by the binding genomic RNA in the 5'-UTR. At low concentration, the polyprotein would promote translation, whereas at high concentration, the polyprotein would encapsidate genomic RNA and then shut off translation. Its function is as follows. Targets the polyprotein to the plasma membrane via a multipartite membrane-binding signal, that includes its myristoylated N-terminus. Matrix protein is part of the pre-integration complex. Implicated in the release from host cell mediated by Vpu. Binds to RNA. Forms the conical core that encapsulates the genomic RNA-nucleocapsid complex in the virion. Most core are conical, with only 7% tubular. The core is constituted by capsid protein hexamer subunits. The core is disassembled soon after virion entry. Host restriction factors such as TRIM5-alpha or TRIMCyp bind retroviral capsids and cause premature capsid disassembly, leading to blocks in reverse transcription. Capsid restriction by TRIM5 is one of the factors which restricts HIV-1 to the human species. Host PIN1 apparently facilitates the virion uncoating. On the other hand, interactions with PDZD8 or CYPA stabilize the capsid. Functionally, encapsulates and protects viral dimeric unspliced genomic RNA (gRNA). Binds these RNAs through its zinc fingers. Acts as a nucleic acid chaperone which is involved in rearangement of nucleic acid secondary structure during gRNA retrotranscription. Also facilitates template switch leading to recombination. As part of the polyprotein, participates in gRNA dimerization, packaging, tRNA incorporation and virion assembly. In terms of biological role, aspartyl protease that mediates proteolytic cleavages of Gag and Gag-Pol polyproteins during or shortly after the release of the virion from the plasma membrane. Cleavages take place as an ordered, step-wise cascade to yield mature proteins. This process is called maturation. Displays maximal activity during the budding process just prior to particle release from the cell. Also cleaves Nef and Vif, probably concomitantly with viral structural proteins on maturation of virus particles. Hydrolyzes host EIF4GI and PABP1 in order to shut off the capped cellular mRNA translation. The resulting inhibition of cellular protein synthesis serves to ensure maximal viral gene expression and to evade host immune response. Its function is as follows. Multifunctional enzyme that converts the viral RNA genome into dsDNA in the cytoplasm, shortly after virus entry into the cell. This enzyme displays a DNA polymerase activity that can copy either DNA or RNA templates, and a ribonuclease H (RNase H) activity that cleaves the RNA strand of RNA-DNA heteroduplexes in a partially processive 3' to 5' endonucleasic mode. Conversion of viral genomic RNA into dsDNA requires many steps. A tRNA(3)-Lys binds to the primer-binding site (PBS) situated at the 5'-end of the viral RNA. RT uses the 3' end of the tRNA primer to perform a short round of RNA-dependent minus-strand DNA synthesis. The reading proceeds through the U5 region and ends after the repeated (R) region which is present at both ends of viral RNA. The portion of the RNA-DNA heteroduplex is digested by the RNase H, resulting in a ssDNA product attached to the tRNA primer. This ssDNA/tRNA hybridizes with the identical R region situated at the 3' end of viral RNA. This template exchange, known as minus-strand DNA strong stop transfer, can be either intra- or intermolecular. RT uses the 3' end of this newly synthesized short ssDNA to perform the RNA-dependent minus-strand DNA synthesis of the whole template. RNase H digests the RNA template except for two polypurine tracts (PPTs) situated at the 5'-end and near the center of the genome. It is not clear if both polymerase and RNase H activities are simultaneous. RNase H probably can proceed both in a polymerase-dependent (RNA cut into small fragments by the same RT performing DNA synthesis) and a polymerase-independent mode (cleavage of remaining RNA fragments by free RTs). Secondly, RT performs DNA-directed plus-strand DNA synthesis using the PPTs that have not been removed by RNase H as primers. PPTs and tRNA primers are then removed by RNase H. The 3' and 5' ssDNA PBS regions hybridize to form a circular dsDNA intermediate. Strand displacement synthesis by RT to the PBS and PPT ends produces a blunt ended, linear dsDNA copy of the viral genome that includes long terminal repeats (LTRs) at both ends. Catalyzes viral DNA integration into the host chromosome, by performing a series of DNA cutting and joining reactions. This enzyme activity takes place after virion entry into a cell and reverse transcription of the RNA genome in dsDNA. The first step in the integration process is 3' processing. This step requires a complex comprising the viral genome, matrix protein, Vpr and integrase. This complex is called the pre-integration complex (PIC). The integrase protein removes 2 nucleotides from each 3' end of the viral DNA, leaving recessed CA OH's at the 3' ends. In the second step, the PIC enters cell nucleus. This process is mediated through integrase and Vpr proteins, and allows the virus to infect a non dividing cell. This ability to enter the nucleus is specific of lentiviruses, other retroviruses cannot and rely on cell division to access cell chromosomes. In the third step, termed strand transfer, the integrase protein joins the previously processed 3' ends to the 5' ends of strands of target cellular DNA at the site of integration. The 5'-ends are produced by integrase-catalyzed staggered cuts, 5 bp apart. A Y-shaped, gapped, recombination intermediate results, with the 5'-ends of the viral DNA strands and the 3' ends of target DNA strands remaining unjoined, flanking a gap of 5 bp. The last step is viral DNA integration into host chromosome. This involves host DNA repair synthesis in which the 5 bp gaps between the unjoined strands are filled in and then ligated. Since this process occurs at both cuts flanking the HIV genome, a 5 bp duplication of host DNA is produced at the ends of HIV-1 integration. Alternatively, Integrase may catalyze the excision of viral DNA just after strand transfer, this is termed disintegration. This Human immunodeficiency virus type 2 subtype B (isolate EHO) (HIV-2) protein is Gag-Pol polyprotein (gag-pol).